The following is a 294-amino-acid chain: Nucleophosmin (294 aa).

Met1 carries the post-translational modification N-acetylmethionine. Positions 1–117 (MEDSMDMDMS…PVHISGQHLV (117 aa)) are necessary for interaction with APEX1. The segment at 1–187 (MEDSMDMDMS…DDDDDFDEEV (187 aa)) is required for interaction with SENP3. Ser4 carries the post-translational modification Phosphoserine; by PLK1 and PLK2. Ser10 carries the post-translational modification Phosphoserine. Lys32 is subject to N6-acetyllysine; alternate. A Glycyl lysine isopeptide (Lys-Gly) (interchain with G-Cter in SUMO1); alternate cross-link involves residue Lys32. A Glycyl lysine isopeptide (Lys-Gly) (interchain with G-Cter in SUMO2); alternate cross-link involves residue Lys32. Residue Ser43 is modified to Phosphoserine. Tyr67 bears the Phosphotyrosine mark. Ser70 carries the post-translational modification Phosphoserine. Phosphothreonine is present on residues Thr75 and Thr95. Positions 121–132 (EDAESEEEEEEE) are enriched in acidic residues. The segment at 121 to 249 (EDAESEEEEE…GPSSVEDIKA (129 aa)) is disordered. Ser125 carries the post-translational modification Phosphoserine; by CDK2. Ser137 and Ser139 each carry phosphoserine. Lys141 participates in a covalent cross-link: Glycyl lysine isopeptide (Lys-Gly) (interchain with G-Cter in SUMO2). At Lys150 the chain carries N6-acetyllysine; alternate. A Glycyl lysine isopeptide (Lys-Gly) (interchain with G-Cter in SUMO2); alternate cross-link involves residue Lys150. The Nuclear localization signal signature appears at 152–157 (PQKKVK). Lys154 bears the N6-acetyllysine mark. The segment covering 161 to 188 (DEDEDDDDDDDDDDDEDDDDDDFDEEVE) has biased composition (acidic residues). An interaction with NOP2 region spans residues 188 to 216 (EEKAPVKKSVRDTPAKNAQKSNQNGKDSK). Residues 189 to 201 (EKAPVKKSVRDTP) show a composition bias toward basic and acidic residues. The Nuclear localization signal motif lies at 192 to 198 (PVKKSVR). At Thr200 the chain carries Phosphothreonine; by CDK1 and CDK2. The span at 203–222 (KNAQKSNQNGKDSKPSTPRS) shows a compositional bias: polar residues. Position 208 is an ADP-ribosylserine (Ser208). Residue Lys213 is modified to N6-acetyllysine. Lys216 is covalently cross-linked (Glycyl lysine isopeptide (Lys-Gly) (interchain with G-Cter in SUMO2)). The residue at position 219 (Thr219) is a Phosphothreonine; by CDK1. A compositionally biased stretch (basic and acidic residues) spans 223-235 (KGQESFKKQEKTP). At Ser227 the chain carries Phosphoserine. Lys229 bears the N6-acetyllysine mark. Position 230 is an N6-acetyllysine; alternate (Lys230). A Glycyl lysine isopeptide (Lys-Gly) (interchain with G-Cter in SUMO); alternate cross-link involves residue Lys230. A phosphothreonine mark is found at Thr234 and Thr237. Residues Ser242 and Ser243 each carry the phosphoserine modification. Residues 243 to 294 (SVEDIKAKMQASIEKGGSLPKVEAKFINYVKNCFRMTDQEAIQDLWQWRKSL) form a required for nucleolar localization region. Lys248 is covalently cross-linked (Glycyl lysine isopeptide (Lys-Gly) (interchain with G-Cter in SUMO1); alternate). Residues Lys248 and Lys250 each participate in a glycyl lysine isopeptide (Lys-Gly) (interchain with G-Cter in SUMO2); alternate cross-link. Lys250 bears the N6-acetyllysine; alternate mark. Phosphoserine is present on Ser254. Residue Lys257 is modified to N6-acetyllysine; alternate. Residue Lys257 forms a Glycyl lysine isopeptide (Lys-Gly) (interchain with G-Cter in SUMO1); alternate linkage. A Glycyl lysine isopeptide (Lys-Gly) (interchain with G-Cter in SUMO2); alternate cross-link involves residue Lys257. Ser260 carries the phosphoserine modification. Residues Lys263, Lys267, and Lys273 each participate in a glycyl lysine isopeptide (Lys-Gly) (interchain with G-Cter in SUMO2); alternate cross-link. A Glycyl lysine isopeptide (Lys-Gly) (interchain with G-Cter in SUMO); alternate cross-link involves residue Lys263. An N6-acetyllysine; alternate mark is found at Lys267 and Lys273. Residue Lys267 forms a Glycyl lysine isopeptide (Lys-Gly) (interchain with G-Cter in SUMO1); alternate linkage. Position 267 is an N6-succinyllysine; alternate (Lys267). Thr279 carries the post-translational modification Phosphothreonine. An N6-acetyllysine modification is found at Lys292.

It belongs to the nucleoplasmin family. In terms of assembly, decamer formed by two pentameric rings associated in a head-to-head fashion. Disulfide-linked dimers under certain conditions. The SWAP complex consists of NPM1, NCL, PARP1 and SWAP70. Interacts with NSUN2 and SENP3. Interacts with the methylated form of RPS10. Interacts (via N-terminal domain) with APEX1; the interaction is RNA-dependent and decreases in hydrogen peroxide-damaged cells. Interacts with isoform 1 of NEK2. Interacts with ROCK2 and BRCA2. Interacts with RPGR. Interacts with CENPW. Interacts with EIF2AK2/PKR. Interacts with CEBPA (isoform 4). Interacts with DDX31; this interaction prevents interaction between NPM1 and HDM2. Interacts with MYC; competitive with NOP53. Interacts with NOP53; the interaction is direct and competitive with MYC. Interacts with LRRC34. Interacts with RRP1B. Interacts with NPM3. Interacts with ALKBH2. Interacts with TTF1 (via C-terminal region). Interacts with NOP2. Interacts with ARID3C (via REKLES DOMAIN); the interaction mediates ARID3C nuclear shuttling. Acetylated at C-terminal lysine residues, thereby increasing affinity to histones. Post-translationally, ADP-ribosylated. In terms of processing, phosphorylated at Ser-4 by PLK1 and PLK2. Phosphorylation at Ser-4 by PLK2 in S phase is required for centriole duplication and is sufficient to trigger centriole replication. Phosphorylation at Ser-4 by PLK1 takes place during mitosis. Phosphorylated by CDK2 at Ser-125 and Thr-200. Phosphorylation at Thr-200 may trigger initiation of centrosome duplication. Phosphorylated by CDK1 at Thr-200, Thr-219, Thr-234 and Thr-237 during cell mitosis. When these four sites are phosphorated, RNA-binding activity seem to be abolished. May be phosphorylated at Ser-70 by NEK2. The Thr-200 phosphorylated form has higher affinity for ROCK2. Sumoylated by ARF. Post-translationally, may be ubiquitinated. Ubiquitination leads to proteasomal degradation. Deubiquitinated by USP36.

It is found in the nucleus. The protein localises to the nucleolus. Its subcellular location is the nucleoplasm. The protein resides in the cytoplasm. It localises to the cytoskeleton. It is found in the microtubule organizing center. The protein localises to the centrosome. Involved in diverse cellular processes such as ribosome biogenesis, centrosome duplication, protein chaperoning, histone assembly, cell proliferation, and regulation of tumor suppressors p53/TP53 and ARF. Binds ribosome presumably to drive ribosome nuclear export. Associated with nucleolar ribonucleoprotein structures and bind single-stranded nucleic acids. Acts as a chaperonin for the core histones H3, H2B and H4. Stimulates APEX1 endonuclease activity on apurinic/apyrimidinic (AP) double-stranded DNA but inhibits APEX1 endonuclease activity on AP single-stranded RNA. May exert a control of APEX1 endonuclease activity within nucleoli devoted to repair AP on rDNA and the removal of oxidized rRNA molecules. In concert with BRCA2, regulates centrosome duplication. Regulates centriole duplication: phosphorylation by PLK2 is able to trigger centriole replication. Negatively regulates the activation of EIF2AK2/PKR and suppresses apoptosis through inhibition of EIF2AK2/PKR autophosphorylation. Antagonizes the inhibitory effect of ATF5 on cell proliferation and relieves ATF5-induced G2/M blockade. In complex with MYC enhances the transcription of MYC target genes. May act as chaperonin or cotransporter in the nucleolar localization of transcription termination factor TTF1. The protein is Nucleophosmin (NPM1) of Bos taurus (Bovine).